Here is a 157-residue protein sequence, read N- to C-terminus: Protein Smg homolog (157 aa).

It belongs to the Smg family.

The sequence is that of Protein Smg homolog from Xylella fastidiosa (strain M23).